Here is a 257-residue protein sequence, read N- to C-terminus: tRNA (guanine-N(1)-)-methyltransferase (257 aa).

S-adenosyl-L-methionine is bound by residues Gly112 and 136-141 (LGDYVL).

Belongs to the RNA methyltransferase TrmD family. As to quaternary structure, homodimer.

Its subcellular location is the cytoplasm. The enzyme catalyses guanosine(37) in tRNA + S-adenosyl-L-methionine = N(1)-methylguanosine(37) in tRNA + S-adenosyl-L-homocysteine + H(+). Specifically methylates guanosine-37 in various tRNAs. The sequence is that of tRNA (guanine-N(1)-)-methyltransferase from Salinispora arenicola (strain CNS-205).